Reading from the N-terminus, the 704-residue chain is Elongation factor G (704 aa).

The 284-residue stretch at 8 to 291 folds into the tr-type G domain; that stretch reads VRYRNIGISA…AVVEYLPSPS (284 aa). GTP-binding positions include 17 to 24, 88 to 92, and 142 to 145; these read AHIDAGKT, DTPGH, and NKMD.

Belongs to the TRAFAC class translation factor GTPase superfamily. Classic translation factor GTPase family. EF-G/EF-2 subfamily.

Its subcellular location is the cytoplasm. Its function is as follows. Catalyzes the GTP-dependent ribosomal translocation step during translation elongation. During this step, the ribosome changes from the pre-translocational (PRE) to the post-translocational (POST) state as the newly formed A-site-bound peptidyl-tRNA and P-site-bound deacylated tRNA move to the P and E sites, respectively. Catalyzes the coordinated movement of the two tRNA molecules, the mRNA and conformational changes in the ribosome. In Blochmanniella pennsylvanica (strain BPEN), this protein is Elongation factor G.